A 355-amino-acid chain; its full sequence is 3-isopropylmalate dehydrogenase (355 aa).

Substrate-binding residues include R90, R100, R128, and D222. Mg(2+) contacts are provided by D222, D246, and D250. 280–292 provides a ligand contact to NAD(+); that stretch reads GSAPDIAGKGIAN.

This sequence belongs to the isocitrate and isopropylmalate dehydrogenases family. LeuB type 1 subfamily. As to quaternary structure, homodimer. The cofactor is Mg(2+). It depends on Mn(2+) as a cofactor.

It is found in the cytoplasm. It catalyses the reaction (2R,3S)-3-isopropylmalate + NAD(+) = 4-methyl-2-oxopentanoate + CO2 + NADH. It participates in amino-acid biosynthesis; L-leucine biosynthesis; L-leucine from 3-methyl-2-oxobutanoate: step 3/4. Its function is as follows. Catalyzes the oxidation of 3-carboxy-2-hydroxy-4-methylpentanoate (3-isopropylmalate) to 3-carboxy-4-methyl-2-oxopentanoate. The product decarboxylates to 4-methyl-2 oxopentanoate. The protein is 3-isopropylmalate dehydrogenase of Burkholderia lata (strain ATCC 17760 / DSM 23089 / LMG 22485 / NCIMB 9086 / R18194 / 383).